The following is a 119-amino-acid chain: Large ribosomal subunit protein bL19 (119 aa).

The protein belongs to the bacterial ribosomal protein bL19 family.

In terms of biological role, this protein is located at the 30S-50S ribosomal subunit interface and may play a role in the structure and function of the aminoacyl-tRNA binding site. This Leuconostoc citreum (strain KM20) protein is Large ribosomal subunit protein bL19.